The following is a 176-amino-acid chain: Protein MAL2 (176 aa).

The Cytoplasmic segment spans residues 1–34 (MSAGGASVPPPPNPAVSFPPPRVTLPAGPDILRT). Residues 31 to 175 (ILRTYSGAFV…SLGLALRRWR (145 aa)) enclose the MARVEL domain. A helical membrane pass occupies residues 35 to 55 (YSGAFVCLEILFGGLVWILVA). Residues 56 to 66 (SSNVPLPLLQG) are Lumenal-facing. Residues 67 to 87 (WVMFVSVTAFFFSLLFLGMFL) traverse the membrane as a helical segment. Residues 88-102 (SGMVAQIDANWNFLD) are Cytoplasmic-facing. The chain crosses the membrane as a helical span at residues 103-123 (FAYHFTVFVFYFGAFLLEAAA). Residues 124–149 (TSLHDLHCNTTITGQPLLSDNQYNIN) lie on the Lumenal side of the membrane. An N-linked (GlcNAc...) asparagine glycan is attached at N132. A helical transmembrane segment spans residues 150-170 (VAASIFAFMTTACYGCSLGLA). The Cytoplasmic portion of the chain corresponds to 171–176 (LRRWRP).

The protein belongs to the MAL family. As to quaternary structure, interacts with TPD52L2. As to expression, predominantly expressed in kidney, lung, and liver. Also found in thyroid gland, stomach and, at lower levels in testis and small intestine.

The protein resides in the cell membrane. It is found in the apical cell membrane. It localises to the endomembrane system. Its subcellular location is the cytoplasm. The protein localises to the perinuclear region. Member of the machinery of polarized transport. Required for the indirect transcytotic route at the step of the egress of the transcytosing cargo from perinuclear endosomes in order for it to travel to the apical surface via a raft-dependent pathway. This chain is Protein MAL2 (MAL2), found in Homo sapiens (Human).